Reading from the N-terminus, the 141-residue chain is ATP synthase epsilon chain, chloroplastic (141 aa).

The protein belongs to the ATPase epsilon chain family. In terms of assembly, F-type ATPases have 2 components, F(1) - the catalytic core - and F(0) - the membrane proton channel. F(1) has five subunits: alpha(3), beta(3), gamma(1), delta(1), epsilon(1). F(0) has four main subunits: a(1), b(1), b'(1) and c(10-14). The alpha and beta chains form an alternating ring which encloses part of the gamma chain. F(1) is attached to F(0) by a central stalk formed by the gamma and epsilon chains, while a peripheral stalk is formed by the delta, b and b' chains.

The protein localises to the plastid. Its subcellular location is the chloroplast thylakoid membrane. Its function is as follows. F(1)F(0) ATP synthase produces ATP from ADP in the presence of a proton or sodium gradient. F-type ATPases consist of two structural domains, F(1) containing the extramembraneous catalytic core and F(0) containing the membrane proton channel, linked together by a central stalk and a peripheral stalk. During catalysis, ATP synthesis in the catalytic domain of F(1) is coupled via a rotary mechanism of the central stalk subunits to proton translocation. This chain is ATP synthase epsilon chain, chloroplastic, found in Chlamydomonas reinhardtii (Chlamydomonas smithii).